The primary structure comprises 156 residues: Small ribosomal subunit protein bS16 (156 aa).

Positions 124–135 (AAKAAEAETPAE) are enriched in low complexity. Positions 124 to 156 (AAKAAEAETPAEVQHDDEKVELADVEESAPESV) are disordered. A compositionally biased stretch (basic and acidic residues) spans 136–145 (VQHDDEKVEL). Over residues 146–156 (ADVEESAPESV) the composition is skewed to acidic residues.

Belongs to the bacterial ribosomal protein bS16 family.

The protein is Small ribosomal subunit protein bS16 of Bifidobacterium animalis subsp. lactis (strain AD011).